Consider the following 368-residue polypeptide: Polynucleotide 5'-hydroxyl-kinase NOL9 (368 aa).

36-43 (GPKNSGKS) is a binding site for ATP.

The protein belongs to the Clp1 family. NOL9/GRC3 subfamily.

It localises to the nucleus. The protein resides in the nucleolus. In terms of biological role, polynucleotide 5'-kinase involved in rRNA processing. The sequence is that of Polynucleotide 5'-hydroxyl-kinase NOL9 from Arabidopsis thaliana (Mouse-ear cress).